Here is a 255-residue protein sequence, read N- to C-terminus: Glutamate racemase (255 aa).

Substrate-binding positions include 7–8 (DS) and 39–40 (YG). Catalysis depends on C70, which acts as the Proton donor/acceptor. 71–72 (NT) serves as a coordination point for substrate. Catalysis depends on C181, which acts as the Proton donor/acceptor. 182 to 183 (TH) is a substrate binding site.

It belongs to the aspartate/glutamate racemases family.

It carries out the reaction L-glutamate = D-glutamate. It participates in cell wall biogenesis; peptidoglycan biosynthesis. In terms of biological role, provides the (R)-glutamate required for cell wall biosynthesis. This is Glutamate racemase from Helicobacter pylori (strain P12).